The sequence spans 707 residues: Serine/threonine protein kinase UL97 (707 aa).

The segment covering 1-14 (MSSALRSRARSASL) has biased composition (low complexity). Disordered regions lie at residues 1–32 (MSSA…PSRA), 115–146 (EKED…GDGY), 176–199 (FTGG…PLRP), and 231–264 (ESQD…EADS). The segment covering 115 to 127 (EKEDAASDKENLR) has biased composition (basic and acidic residues). The segment covering 178 to 188 (GGSDPSDSVSG) has biased composition (low complexity). ATP-binding positions include 337–345 (LGQGSFGEV) and Lys-359. Asp-456 functions as the Proton acceptor in the catalytic mechanism.

It belongs to the protein kinase superfamily. Tyr protein kinase family. HCMV ganciclovir subfamily. As to quaternary structure, interacts with UL83. Post-translationally, autophosphorylates on serine and threonine residues.

Its subcellular location is the virion. It catalyses the reaction L-seryl-[protein] + ATP = O-phospho-L-seryl-[protein] + ADP + H(+). The enzyme catalyses L-threonyl-[protein] + ATP = O-phospho-L-threonyl-[protein] + ADP + H(+). In terms of biological role, serine/threonine protein kinase that plays important roles in several processes including nuclear viral egress, viral replication or regulation of host cell cycle progression. Participates in the acquisition of tegument during virion morphogenesis in the nucleus. Redistributes the host nuclear lamina by phosphorylating cellular Lamins-A/C. Plays a role in viral DNA synthesis by phosphorylating the DNA polymerase processivity factor UL44. Stimulates host cell cycle to support viral DNA synthesis by phosphorylating host retinoblastoma/RB1 protein. Additional substrates have been identified including host EF1D or H2B. Also phosphorylates host SAMHD1 and thereby counteracts its antiviral effect by reducing its dNTP hydrolase activity. In Human cytomegalovirus (strain Towne) (HHV-5), this protein is Serine/threonine protein kinase UL97 (UL97).